The chain runs to 416 residues: 3-oxoacyl-[acyl-carrier-protein] synthase 2 (416 aa).

The region spanning 6–414 (KKRVVVTGLG…GHNVTLAFKK (409 aa)) is the Ketosynthase family 3 (KS3) domain. Catalysis depends on for beta-ketoacyl synthase activity residues Cys167, His307, and His344.

The protein belongs to the thiolase-like superfamily. Beta-ketoacyl-ACP synthases family. As to quaternary structure, homodimer.

The enzyme catalyses a fatty acyl-[ACP] + malonyl-[ACP] + H(+) = a 3-oxoacyl-[ACP] + holo-[ACP] + CO2. It carries out the reaction (9Z)-hexadecenoyl-[ACP] + malonyl-[ACP] + H(+) = 3-oxo-(11Z)-octadecenoyl-[ACP] + holo-[ACP] + CO2. It functions in the pathway lipid metabolism; fatty acid biosynthesis. In terms of biological role, involved in the type II fatty acid elongation cycle. Catalyzes the elongation of a wide range of acyl-ACP by the addition of two carbons from malonyl-ACP to an acyl acceptor. Can efficiently catalyze the conversion of palmitoleoyl-ACP (cis-hexadec-9-enoyl-ACP) to cis-vaccenoyl-ACP (cis-octadec-11-enoyl-ACP), an essential step in the thermal regulation of fatty acid composition. The polypeptide is 3-oxoacyl-[acyl-carrier-protein] synthase 2 (fabF) (Synechocystis sp. (strain ATCC 27184 / PCC 6803 / Kazusa)).